Reading from the N-terminus, the 309-residue chain is Vacuolar membrane protein YOR292C (309 aa).

The Vacuolar portion of the chain corresponds to 1–52 (MPLQLFGRDQIVVHYDNGNMSNDDQNHQSVLGSWTRRAAAALRTLMNKRIQR). A glycan (N-linked (GlcNAc...) asparagine) is linked at N19. A helical membrane pass occupies residues 53–73 (ITLTHWLLLVIWVTSLWKFTS). Over 74 to 81 (HYRQLYAN) the chain is Cytoplasmic. Residues 82-102 (SAVFATLCTNILLFGISDILA) traverse the membrane as a helical segment. Topologically, residues 103 to 183 (QSIACFYSYH…KTDTFDFFRW (81 aa)) are vacuolar. A glycan (N-linked (GlcNAc...) asparagine) is linked at N121. A helical membrane pass occupies residues 184–204 (GCFMFWGFFISFFQAPWYKFL). The Cytoplasmic portion of the chain corresponds to 205-225 (NFFYTEDPTVVQVFERVLSDQ). Residues 226 to 246 (LLYSPISLYCFFMFSNYVMEG) form a helical membrane-spanning segment. Residues 247-260 (GDKDTLGKKIQRLY) lie on the Vacuolar side of the membrane. Residues 261 to 281 (ISTLGCNYLVWPMVQFINFLI) traverse the membrane as a helical segment. The Cytoplasmic segment spans residues 282–309 (MPRDFQAPFSSSVGVVWNCFLSMRNASK).

It belongs to the peroxisomal membrane protein PXMP2/4 family. N-glycosylated.

The protein localises to the vacuole membrane. In Saccharomyces cerevisiae (strain ATCC 204508 / S288c) (Baker's yeast), this protein is Vacuolar membrane protein YOR292C.